Reading from the N-terminus, the 93-residue chain is Large ribosomal subunit protein uL23cy (93 aa).

Belongs to the universal ribosomal protein uL23 family. Part of the 50S ribosomal subunit.

It localises to the plastid. Its subcellular location is the chloroplast. Binds to 23S rRNA. The sequence is that of Large ribosomal subunit protein uL23cy (rpl23-B) from Agrostis stolonifera (Creeping bentgrass).